A 47-amino-acid chain; its full sequence is Glyceraldehyde-3-phosphate dehydrogenase, cytosolic (47 aa).

The protein belongs to the glyceraldehyde-3-phosphate dehydrogenase family. As to quaternary structure, homotetramer.

It is found in the cytoplasm. The catalysed reaction is D-glyceraldehyde 3-phosphate + phosphate + NAD(+) = (2R)-3-phospho-glyceroyl phosphate + NADH + H(+). Its pathway is carbohydrate degradation; glycolysis; pyruvate from D-glyceraldehyde 3-phosphate: step 1/5. In Pseudotsuga menziesii (Douglas-fir), this protein is Glyceraldehyde-3-phosphate dehydrogenase, cytosolic.